A 436-amino-acid polypeptide reads, in one-letter code: Histidinol dehydrogenase (436 aa).

Substrate-binding residues include Ser242, Gln264, and His267. 2 residues coordinate Zn(2+): Gln264 and His267. Residues Glu332 and His333 each act as proton acceptor in the active site. The substrate site is built by His333, Asp366, Glu420, and His425. Asp366 provides a ligand contact to Zn(2+). His425 provides a ligand contact to Zn(2+).

It belongs to the histidinol dehydrogenase family. The cofactor is Zn(2+).

It catalyses the reaction L-histidinol + 2 NAD(+) + H2O = L-histidine + 2 NADH + 3 H(+). It participates in amino-acid biosynthesis; L-histidine biosynthesis; L-histidine from 5-phospho-alpha-D-ribose 1-diphosphate: step 9/9. In terms of biological role, catalyzes the sequential NAD-dependent oxidations of L-histidinol to L-histidinaldehyde and then to L-histidine. This Nitratidesulfovibrio vulgaris (strain ATCC 29579 / DSM 644 / CCUG 34227 / NCIMB 8303 / VKM B-1760 / Hildenborough) (Desulfovibrio vulgaris) protein is Histidinol dehydrogenase.